The following is a 333-amino-acid chain: DnaJ homolog subfamily C member 25 homolog (333 aa).

Residues 8–28 (LVLLALLPTMALGLLEGLYCG) form a helical membrane-spanning segment. One can recognise a J domain in the interval 31–99 (NCYDVLGVTR…ESRTDYDYML (69 aa)). Residues 123–143 (VRVVIVVVLTIVSVIQYYSGW) form a helical membrane-spanning segment. Positions 158–208 (KYRNQALEIARDEIQEKIQKKGKNRMSKNDQRDELERIIRRVIEEKMDVKG) form a coiled coil. The helical transmembrane segment at 218 to 238 (VLWVQLIICPYTILSFIVWHA) threads the bilayer.

The protein belongs to the DNAJC25 family.

Its subcellular location is the membrane. In Drosophila melanogaster (Fruit fly), this protein is DnaJ homolog subfamily C member 25 homolog.